A 272-amino-acid chain; its full sequence is MDNIKIIVASDSIGETAELVARAGVSQFNPKQCKHEFLRYPYIESFENVDEVIQVAKDTNAIIVYTLIKPEIKKYMISKVNEHALKSVDIMGPLMELLSNSIEETPYYEPGMVHRLDDAYFKKIDAIEFAVKYDDGKDPKGLPKADIVLLGISRTSKTPLSQYLAHKSYKVMNIPIVPEVTPPDGLFNVDPSKCIALKISEEKLNRIRKERLKQLGLGDKARYATEARIQEELDYFEKLVDKIGCPVIDVSDKAIEETANDIIHFIEQNKSK.

151 to 158 (GISRTSKT) is an ADP binding site.

The protein belongs to the pyruvate, phosphate/water dikinase regulatory protein family. PDRP subfamily.

The catalysed reaction is N(tele)-phospho-L-histidyl/L-threonyl-[pyruvate, phosphate dikinase] + ADP = N(tele)-phospho-L-histidyl/O-phospho-L-threonyl-[pyruvate, phosphate dikinase] + AMP + H(+). It carries out the reaction N(tele)-phospho-L-histidyl/O-phospho-L-threonyl-[pyruvate, phosphate dikinase] + phosphate + H(+) = N(tele)-phospho-L-histidyl/L-threonyl-[pyruvate, phosphate dikinase] + diphosphate. Its function is as follows. Bifunctional serine/threonine kinase and phosphorylase involved in the regulation of the pyruvate, phosphate dikinase (PPDK) by catalyzing its phosphorylation/dephosphorylation. This chain is Putative pyruvate, phosphate dikinase regulatory protein 1, found in Staphylococcus epidermidis (strain ATCC 35984 / DSM 28319 / BCRC 17069 / CCUG 31568 / BM 3577 / RP62A).